Reading from the N-terminus, the 562-residue chain is Arginine--tRNA ligase (562 aa).

A 'HIGH' region motif is present at residues 122-132 (PNIAKPISMGH).

This sequence belongs to the class-I aminoacyl-tRNA synthetase family. As to quaternary structure, monomer.

It localises to the cytoplasm. The enzyme catalyses tRNA(Arg) + L-arginine + ATP = L-arginyl-tRNA(Arg) + AMP + diphosphate. The chain is Arginine--tRNA ligase from Pediococcus pentosaceus (strain ATCC 25745 / CCUG 21536 / LMG 10740 / 183-1w).